Here is a 149-residue protein sequence, read N- to C-terminus: Putative pre-16S rRNA nuclease (149 aa).

Belongs to the YqgF nuclease family.

Its subcellular location is the cytoplasm. Its function is as follows. Could be a nuclease involved in processing of the 5'-end of pre-16S rRNA. This Pseudoalteromonas translucida (strain TAC 125) protein is Putative pre-16S rRNA nuclease.